Reading from the N-terminus, the 350-residue chain is Erythronate-4-phosphate dehydrogenase (350 aa).

Serine 45 and threonine 66 together coordinate substrate. NAD(+)-binding positions include 124–125, aspartate 144, 203–205, and aspartate 226; these read QV and ASR. Arginine 205 is an active-site residue. Glutamate 231 is an active-site residue. Histidine 248 serves as the catalytic Proton donor. Glycine 251 serves as a coordination point for NAD(+).

Belongs to the D-isomer specific 2-hydroxyacid dehydrogenase family. PdxB subfamily. As to quaternary structure, homodimer.

It localises to the cytoplasm. The enzyme catalyses 4-phospho-D-erythronate + NAD(+) = (R)-3-hydroxy-2-oxo-4-phosphooxybutanoate + NADH + H(+). The protein operates within cofactor biosynthesis; pyridoxine 5'-phosphate biosynthesis; pyridoxine 5'-phosphate from D-erythrose 4-phosphate: step 2/5. Catalyzes the oxidation of erythronate-4-phosphate to 3-hydroxy-2-oxo-4-phosphonooxybutanoate. The chain is Erythronate-4-phosphate dehydrogenase from Legionella pneumophila subsp. pneumophila (strain Philadelphia 1 / ATCC 33152 / DSM 7513).